A 157-amino-acid chain; its full sequence is Large ribosomal subunit protein uL11 (157 aa).

This sequence belongs to the universal ribosomal protein uL11 family. As to quaternary structure, part of the ribosomal stalk of the 50S ribosomal subunit. Interacts with L10 and the large rRNA to form the base of the stalk. L10 forms an elongated spine to which L12 dimers bind in a sequential fashion forming a multimeric L10(L12)X complex.

Its function is as follows. Forms part of the ribosomal stalk which helps the ribosome interact with GTP-bound translation factors. The polypeptide is Large ribosomal subunit protein uL11 (Methanocorpusculum labreanum (strain ATCC 43576 / DSM 4855 / Z)).